We begin with the raw amino-acid sequence, 243 residues long: Terpene cyclase janB (243 aa).

A run of 7 helical transmembrane segments spans residues 19 to 39 (LADL…VGMV), 48 to 68 (YGMA…YCVF), 77 to 97 (LGVF…AIIF), 112 to 132 (LPWI…ALAA), 134 to 154 (IGPS…LSVG), 172 to 194 (LWLS…WMYW), and 205 to 225 (LVLW…VCFW).

Belongs to the paxB family.

It localises to the membrane. The protein operates within secondary metabolite biosynthesis. In terms of biological role, terpene cyclase; part of the gene cluster that mediates the biosynthesis of the indole diterpenes janthitremanes such as shearinine K or shearinine A. The geranylgeranyl diphosphate (GGPP) synthase janG catalyzes the first step in janthitremane biosynthesis via conversion of farnesyl pyrophosphate and isopentyl pyrophosphate into geranylgeranyl pyrophosphate (GGPP). Condensation of indole-3-glycerol phosphate with GGPP by the prenyl transferase janC then forms 3-geranylgeranylindole (3-GGI). Epoxidation by the FAD-dependent monooxygenase janM leads to a epoxidized-GGI that is substrate of the terpene cyclase janB for cyclization to yield paspaline. Paspaline is subsequently converted to 13-desoxypaspaline by the cytochrome P450 monooxygenase janP, via beta-PC-M6 in a series of alpha-face oxidations. The cytochrome P450 monooxygenase janQ is proposed to carry out sequential beta-face oxidation steps at C-7 and C-13 of 13-desoxypaspaline to form paspalicine and paspalinine respectively. The indole diterpene prenyltransferase janD may then convert paspalinine into shearinine K which is substrate of janO and/or additional enzymes for oxidation and cyclization to generate shearinine A. This chain is Terpene cyclase janB, found in Penicillium janthinellum (Penicillium vitale).